A 118-amino-acid polypeptide reads, in one-letter code: D-dopachrome decarboxylase-B (118 aa).

Pro2 carries the N-acetylproline modification.

This sequence belongs to the MIF family. Homotrimer.

The protein localises to the cytoplasm. The catalysed reaction is D-dopachrome + H(+) = 5,6-dihydroxyindole + CO2. Its function is as follows. Tautomerization of D-dopachrome with decarboxylation to give 5,6-dihydroxyindole (DHI). This chain is D-dopachrome decarboxylase-B (ddt-b), found in Xenopus laevis (African clawed frog).